The chain runs to 140 residues: Large ribosomal subunit protein uL14 (140 aa).

The protein belongs to the universal ribosomal protein uL14 family.

In Aedes aegypti (Yellowfever mosquito), this protein is Large ribosomal subunit protein uL14 (RpL23-A).